Reading from the N-terminus, the 224-residue chain is UPF0758 protein Noc_0236 (224 aa).

An MPN domain is found at 102-224; sequence VLTDPQTTQR…TLSFAERGLL (123 aa). Zn(2+)-binding residues include H173, H175, and D186. The JAMM motif signature appears at 173–186; sequence HNHPSGVAEPSRAD.

Belongs to the UPF0758 family.

The protein is UPF0758 protein Noc_0236 of Nitrosococcus oceani (strain ATCC 19707 / BCRC 17464 / JCM 30415 / NCIMB 11848 / C-107).